The sequence spans 356 residues: Cyclin-A1-4 (356 aa).

The protein belongs to the cyclin family. Cyclin AB subfamily.

In Oryza sativa subsp. japonica (Rice), this protein is Cyclin-A1-4 (CYCA1-4).